The sequence spans 144 residues: Cytochrome c-type biogenesis protein CcmE (144 aa).

The Cytoplasmic segment spans residues 1–7 (MKPRHKR). A helical; Signal-anchor for type II membrane protein transmembrane segment spans residues 8–28 (ALMIVAALAVIGIAALLILNA). The Extracellular segment spans residues 29–144 (LNSNIALYVT…EQAQKNGSAK (116 aa)). Residues His-121 and Tyr-125 each coordinate heme.

It belongs to the CcmE/CycJ family.

The protein resides in the cell membrane. Functionally, heme chaperone required for the biogenesis of c-type cytochromes. Transiently binds heme delivered by CcmC and transfers the heme to apo-cytochromes in a process facilitated by CcmF and CcmH. This chain is Cytochrome c-type biogenesis protein CcmE, found in Polynucleobacter asymbioticus (strain DSM 18221 / CIP 109841 / QLW-P1DMWA-1) (Polynucleobacter necessarius subsp. asymbioticus).